A 146-amino-acid polypeptide reads, in one-letter code: ATP synthase epsilon chain (146 aa).

Positions 103 to 124 are disordered; that stretch reads QAERELGQLPEEEDEDSRRARE.

It belongs to the ATPase epsilon chain family. In terms of assembly, F-type ATPases have 2 components, CF(1) - the catalytic core - and CF(0) - the membrane proton channel. CF(1) has five subunits: alpha(3), beta(3), gamma(1), delta(1), epsilon(1). CF(0) has three main subunits: a, b and c.

The protein resides in the cell membrane. Its function is as follows. Produces ATP from ADP in the presence of a proton gradient across the membrane. The chain is ATP synthase epsilon chain from Rubrobacter xylanophilus (strain DSM 9941 / JCM 11954 / NBRC 16129 / PRD-1).